The primary structure comprises 685 residues: DNA ligase (685 aa).

NAD(+)-binding positions include 34–38, 83–84, and glutamate 113; these read DAVFD and SL. Catalysis depends on lysine 115, which acts as the N6-AMP-lysine intermediate. NAD(+)-binding residues include arginine 136, glutamate 173, lysine 297, and lysine 321. Zn(2+) contacts are provided by cysteine 415, cysteine 418, cysteine 433, and cysteine 438. The BRCT domain maps to 607–685; the sequence is QEKLQFSGKT…EQELMTLISN (79 aa).

Belongs to the NAD-dependent DNA ligase family. LigA subfamily. It depends on Mg(2+) as a cofactor. The cofactor is Mn(2+).

The catalysed reaction is NAD(+) + (deoxyribonucleotide)n-3'-hydroxyl + 5'-phospho-(deoxyribonucleotide)m = (deoxyribonucleotide)n+m + AMP + beta-nicotinamide D-nucleotide.. Its function is as follows. DNA ligase that catalyzes the formation of phosphodiester linkages between 5'-phosphoryl and 3'-hydroxyl groups in double-stranded DNA using NAD as a coenzyme and as the energy source for the reaction. It is essential for DNA replication and repair of damaged DNA. In Prochlorococcus marinus (strain SARG / CCMP1375 / SS120), this protein is DNA ligase.